The sequence spans 345 residues: Diacylglycerol O-acyltransferase 1 (345 aa).

Residues 1–49 (MSEETSIPGIIASTPPISKDSRRNVSHWLQALAVFLHSVSLTLTASWYT) are Cytoplasmic-facing. Residues 50–70 (VLWAFLPFWPFLIVYLIWLIY) form a helical membrane-spanning segment. Residues 71-113 (DDGFVTGKDRQKRWLRNAPPYRWFCHYFPIRLHKTTELDSEKN) lie on the Lumenal side of the membrane. The helical transmembrane segment at 114 to 134 (YIFGYHPHGIISLGAFGGFAS) threads the bilayer. The Cytoplasmic segment spans residues 135–141 (EGADFSK). The helical transmembrane segment at 142 to 162 (LFPGINVSVLTLNSNFYVPVY) threads the bilayer. The Lumenal portion of the chain corresponds to 163-216 (RDYLMALNINSVSKKSCVSILSRKPGDSVLIVIGGAQESLLSRPGQNNLVLKKR). The helical transmembrane segment at 217–237 (FGFVKLAFLTGSSLVPCFAFG) threads the bilayer. Topologically, residues 238–345 (ESDIFEQVDN…NRISELKLSA (108 aa)) are cytoplasmic.

The protein belongs to the diacylglycerol acyltransferase family.

It is found in the lipid droplet. The protein resides in the endoplasmic reticulum membrane. The catalysed reaction is an acyl-CoA + a 1,2-diacyl-sn-glycerol = a triacyl-sn-glycerol + CoA. It carries out the reaction a 2-acylglycerol + an acyl-CoA = a 1,2-diacyl-sn-glycerol + CoA. The protein operates within glycerolipid metabolism; triacylglycerol biosynthesis. Catalyzes the terminal and only committed step in triacylglycerol (TAG) synthesis by using diacylglycerol (DAG) and fatty acyl-CoA as substrates. Required for storage lipid synthesis. Major DAG esterifying enzyme in stationary phase when TAG production is particularly active. Involved in lipid particle synthesis from the endoplasmic reticulum, promoting localized TAG production at discrete ER subdomains. The sequence is that of Diacylglycerol O-acyltransferase 1 (dga1) from Schizosaccharomyces pombe (strain 972 / ATCC 24843) (Fission yeast).